The following is a 332-amino-acid chain: Ribose-phosphate pyrophosphokinase (332 aa).

Residues 43–45 (DGE) and 102–103 (RQ) each bind ATP. Residues His136 and Asp176 each coordinate Mg(2+). Residue Lys199 is part of the active site. D-ribose 5-phosphate-binding positions include Arg201, Asp225, and 229–233 (DTGGT).

The protein belongs to the ribose-phosphate pyrophosphokinase family. Class I subfamily. In terms of assembly, homohexamer. It depends on Mg(2+) as a cofactor.

It localises to the cytoplasm. It catalyses the reaction D-ribose 5-phosphate + ATP = 5-phospho-alpha-D-ribose 1-diphosphate + AMP + H(+). It functions in the pathway metabolic intermediate biosynthesis; 5-phospho-alpha-D-ribose 1-diphosphate biosynthesis; 5-phospho-alpha-D-ribose 1-diphosphate from D-ribose 5-phosphate (route I): step 1/1. Its function is as follows. Involved in the biosynthesis of the central metabolite phospho-alpha-D-ribosyl-1-pyrophosphate (PRPP) via the transfer of pyrophosphoryl group from ATP to 1-hydroxyl of ribose-5-phosphate (Rib-5-P). This chain is Ribose-phosphate pyrophosphokinase, found in Mycoplasma genitalium (strain ATCC 33530 / DSM 19775 / NCTC 10195 / G37) (Mycoplasmoides genitalium).